We begin with the raw amino-acid sequence, 334 residues long: D-fructose 1,6-bisphosphatase class 2/sedoheptulose 1,7-bisphosphatase (334 aa).

Residues aspartate 33, glutamate 57, aspartate 85, and glutamate 88 each contribute to the Mn(2+) site. Residues 88–90 (EGT), tyrosine 119, 164–166 (RAR), and 186–188 (DGD) contribute to the substrate site. Glutamate 213 lines the Mn(2+) pocket.

The protein belongs to the FBPase class 2 family. In terms of assembly, homotetramer. It depends on Mn(2+) as a cofactor.

The catalysed reaction is beta-D-fructose 1,6-bisphosphate + H2O = beta-D-fructose 6-phosphate + phosphate. It carries out the reaction D-sedoheptulose 1,7-bisphosphate + H2O = D-sedoheptulose 7-phosphate + phosphate. It participates in carbohydrate biosynthesis; Calvin cycle. In terms of biological role, catalyzes the hydrolysis of fructose 1,6-bisphosphate (Fru 1,6-P2) and sedoheptulose 1,7-bisphosphate (Sed 1,7-P2) to fructose 6-phosphate and sedoheptulose 7-phosphate, respectively. In Synechococcus sp. (strain CC9902), this protein is D-fructose 1,6-bisphosphatase class 2/sedoheptulose 1,7-bisphosphatase.